The sequence spans 892 residues: Putative VWFA domain-containing protein ORF892 (892 aa).

The disordered stretch occupies residues 109–548 (EEQLQRRPQR…RGYAHGDEDL (440 aa)). Over residues 129-142 (SEVANQRVSRSAEN) the composition is skewed to polar residues. Residues 143–162 (QGKRGNEEKQQQKTPGKTEE) are compositionally biased toward basic and acidic residues. Residues 169-184 (ESGEEGNQQEESGEEQ) show a composition bias toward acidic residues. Positions 185–196 (EGVKGSRSKQRE) are enriched in basic and acidic residues. Positions 212 to 223 (ESGESESEEGQS) are enriched in acidic residues. 2 stretches are compositionally biased toward low complexity: residues 224 to 238 (SEET…GNQQ) and 271 to 283 (GNGQ…AQNG). Residues 287 to 300 (GESEGEITESESAS) show a composition bias toward acidic residues. Low complexity predominate over residues 301–323 (EEQTGSKGKSGQQGEEGQQQSGS). Composition is skewed to acidic residues over residues 324 to 336 (EGEE…ESGE) and 425 to 448 (SESE…ETEE). Positions 453-466 (SEAEGTAAEGEVGQ) are enriched in low complexity. 2 stretches are compositionally biased toward polar residues: residues 467–481 (PSEQ…SGQR) and 512–531 (QTGS…QQGE). Basic and acidic residues predominate over residues 536 to 546 (EGGRGYAHGDE). Residues 553-620 (QEINSILQTL…VQKLLKDLNV (68 aa)) are a coiled coil. The VWFA domain occupies 723–892 (DFLFVIDSSG…GNIVLKRLVH (170 aa)).

The sequence is that of Putative VWFA domain-containing protein ORF892 from Acidianus two-tailed virus (ATV).